The primary structure comprises 527 residues: Glutamate--cysteine ligase (527 aa).

Belongs to the glutamate--cysteine ligase type 1 family. Type 1 subfamily.

The catalysed reaction is L-cysteine + L-glutamate + ATP = gamma-L-glutamyl-L-cysteine + ADP + phosphate + H(+). It functions in the pathway sulfur metabolism; glutathione biosynthesis; glutathione from L-cysteine and L-glutamate: step 1/2. This chain is Glutamate--cysteine ligase, found in Bordetella parapertussis (strain 12822 / ATCC BAA-587 / NCTC 13253).